Reading from the N-terminus, the 95-residue chain is Glutamyl-tRNA(Gln) amidotransferase subunit C (95 aa).

It belongs to the GatC family. In terms of assembly, heterotrimer of A, B and C subunits.

The catalysed reaction is L-glutamyl-tRNA(Gln) + L-glutamine + ATP + H2O = L-glutaminyl-tRNA(Gln) + L-glutamate + ADP + phosphate + H(+). It catalyses the reaction L-aspartyl-tRNA(Asn) + L-glutamine + ATP + H2O = L-asparaginyl-tRNA(Asn) + L-glutamate + ADP + phosphate + 2 H(+). Its function is as follows. Allows the formation of correctly charged Asn-tRNA(Asn) or Gln-tRNA(Gln) through the transamidation of misacylated Asp-tRNA(Asn) or Glu-tRNA(Gln) in organisms which lack either or both of asparaginyl-tRNA or glutaminyl-tRNA synthetases. The reaction takes place in the presence of glutamine and ATP through an activated phospho-Asp-tRNA(Asn) or phospho-Glu-tRNA(Gln). This Rhizobium meliloti (strain 1021) (Ensifer meliloti) protein is Glutamyl-tRNA(Gln) amidotransferase subunit C.